A 71-amino-acid polypeptide reads, in one-letter code: Small ribosomal subunit protein bS21 (71 aa).

A disordered region spans residues 39 to 71; the sequence is EKPTTVRKRAKAAAQKRHAKKLARENARRVRLY. Basic residues predominate over residues 43-59; the sequence is TVRKRAKAAAQKRHAKK. The span at 60–71 shows a compositional bias: basic and acidic residues; that stretch reads LARENARRVRLY.

It belongs to the bacterial ribosomal protein bS21 family.

This chain is Small ribosomal subunit protein bS21, found in Vibrio atlanticus (strain LGP32) (Vibrio splendidus (strain Mel32)).